We begin with the raw amino-acid sequence, 214 residues long: Probable septum site-determining protein MinC (214 aa).

Belongs to the MinC family. Interacts with MinD and FtsZ.

Its function is as follows. Cell division inhibitor that blocks the formation of polar Z ring septums. Rapidly oscillates between the poles of the cell to destabilize FtsZ filaments that have formed before they mature into polar Z rings. Prevents FtsZ polymerization. The polypeptide is Probable septum site-determining protein MinC (Caldanaerobacter subterraneus subsp. tengcongensis (strain DSM 15242 / JCM 11007 / NBRC 100824 / MB4) (Thermoanaerobacter tengcongensis)).